The sequence spans 751 residues: FAD-dependent monooxygenase atnA (751 aa).

Residues 8-28 traverse the membrane as a helical segment; the sequence is LIVGGGVAGLSLAIMLEAYGF. Residues glutamate 34, glycine 48, and arginine 109 each coordinate FAD. Residue tyrosine 218 is part of the active site. FAD contacts are provided by aspartate 311 and alanine 324. The next 8 membrane-spanning stretches (helical) occupy residues 446–466, 481–501, 508–528, 563–583, 590–610, 639–659, 663–683, and 706–726; these read PLATISWIVFLTLAACFPWSV, SEVFQLYTSVMAVSISGLWVI, LLISPMFSSLPWILASNYWGW, ALLPCLAMAYSIPGILTALAS, DWWPVAHCTFPVLVYVSSTFL, IAVVSSAVHVTLIWNHGAALL, IISLLSVPLARTLASLTALIV, and AWAVILVSTVLLGPAASLAGA.

This sequence belongs to the paxM FAD-dependent monooxygenase family. FAD is required as a cofactor.

It localises to the membrane. Its pathway is secondary metabolite biosynthesis; terpenoid biosynthesis. Functionally, FAD-dependent monooxygenase; part of the gene cluster that mediates the biosynthesis of the meroterpenoids arthripenoids. The pathway begins with the HR-PKS atnH that catalyzes two chain-extension steps to form a reduced triketide, which then primes the SAT domain in the NR-PKS atnG to initiate three more cycles of extension to give a linear hexaketide corresponding to the polyketide part of arthripenoids. The FAD-dependent monooxygenase atnJ then performs an oxidative decarboxylation at C11 of the atnH/atnG product, via an electrophilic aromatic hydroxylation with concomitant ipso-decarboxylation. The membrane-bound polyprenyl transferase atnF then introduces a farnesyl group before the FAD-dependent monooxygenase atnK functions as the first epoxidase on terminal C12'-C13' olefin, followed by a second epoxidation on C7'-C8' catalyzed by atnA. The terpene cyclase/mutase atnI then initiates the sequential tricyclic ring formation through protonation of the terminal epoxide and catalyzes the regioselective and stereoselective 6/6/6-tricyclic ring formation. The cytochrome P450 monooxygenase atnM is responsible for hydroxylating both C1' and C10'. The next steps may involve ketoreduction and acetyl transfer by the ketoreductase atnB and the acetyltransferase atnC, and lead to the production of arthripenoid B, the final biosynthetic product of the atn cluster. The hydroquinone moiety in arthripenoid B is prone to undergo spontaneous oxidation to afford a benzoquinone compound, a key intermediate for generating structure diversity. For instance, addition of a cysteine followed by ring contraction gives arthripenoid A, tautomerization gives the main product arthripenoid C, addition of a molecular of water or amine affords arthripenoid D or E, respectively, and loss of one water forms arthripenoid F. The protein is FAD-dependent monooxygenase atnA of Arthrinium sp.